A 393-amino-acid polypeptide reads, in one-letter code: Homoserine O-succinyltransferase (393 aa).

The AB hydrolase-1 domain maps to 62 to 372; sequence NAVLVCHALN…PHGHDAFLLD (311 aa). S168 (nucleophile) is an active-site residue. R238 is a binding site for substrate. Active-site residues include D333 and H366. D367 is a substrate binding site.

It belongs to the AB hydrolase superfamily. MetX family. Homodimer.

It is found in the cytoplasm. The enzyme catalyses L-homoserine + succinyl-CoA = O-succinyl-L-homoserine + CoA. Its pathway is amino-acid biosynthesis; L-methionine biosynthesis via de novo pathway; O-succinyl-L-homoserine from L-homoserine: step 1/1. Transfers a succinyl group from succinyl-CoA to L-homoserine, forming succinyl-L-homoserine. In Cupriavidus necator (strain ATCC 17699 / DSM 428 / KCTC 22496 / NCIMB 10442 / H16 / Stanier 337) (Ralstonia eutropha), this protein is Homoserine O-succinyltransferase.